Consider the following 75-residue polypeptide: CDC42 small effector protein 1 (75 aa).

S-palmitoyl cysteine attachment occurs at residues cysteine 10 and cysteine 11. Positions 30–43 (IGEPTNFVHLTHIG) constitute a CRIB domain. Residues 45 to 75 (GEMADGMQPSGPIKEQMRSKVPHANGRNSLL) form a disordered region.

This sequence belongs to the CDC42SE/SPEC family.

The protein localises to the cytoplasm. It localises to the cytoskeleton. It is found in the cell membrane. In terms of biological role, probably involved in the organization of the actin cytoskeleton by acting downstream of CDC42, inducing actin filament assembly. In Danio rerio (Zebrafish), this protein is CDC42 small effector protein 1 (cdc42se1).